The primary structure comprises 308 residues: Carnitine transport binding protein OpuCC (308 aa).

The signal sequence occupies residues 1 to 22; sequence MKKKFIALFSVLLLTSSLFLSS. Cys23 carries N-palmitoyl cysteine lipidation. A lipid anchor (S-diacylglycerol cysteine) is attached at Cys23.

This sequence belongs to the OsmX family. As to quaternary structure, the complex is composed of two ATP-binding proteins (OpuCA), two transmembrane proteins (OpuCB and OpuCD) and a solute-binding protein (OpuCC).

The protein resides in the cell membrane. In terms of biological role, part of the ABC transporter complex OpuCABCD involved in carnitine uptake. Involved, with BetL and GbuABC, in osmoprotection and cryoprotection of Listeria. Can also mediate weak glycine betaine transport. This Listeria monocytogenes serotype 1/2a (strain 10403S) protein is Carnitine transport binding protein OpuCC (opuCC).